The chain runs to 469 residues: 3-isopropylmalate dehydratase large subunit (469 aa).

[4Fe-4S] cluster-binding residues include C350, C410, and C413.

It belongs to the aconitase/IPM isomerase family. LeuC type 1 subfamily. As to quaternary structure, heterodimer of LeuC and LeuD. It depends on [4Fe-4S] cluster as a cofactor.

It carries out the reaction (2R,3S)-3-isopropylmalate = (2S)-2-isopropylmalate. Its pathway is amino-acid biosynthesis; L-leucine biosynthesis; L-leucine from 3-methyl-2-oxobutanoate: step 2/4. Catalyzes the isomerization between 2-isopropylmalate and 3-isopropylmalate, via the formation of 2-isopropylmaleate. This is 3-isopropylmalate dehydratase large subunit from Rhizobium leguminosarum bv. trifolii (strain WSM2304).